A 139-amino-acid chain; its full sequence is ATP synthase epsilon chain (139 aa).

The protein belongs to the ATPase epsilon chain family. In terms of assembly, F-type ATPases have 2 components, CF(1) - the catalytic core - and CF(0) - the membrane proton channel. CF(1) has five subunits: alpha(3), beta(3), gamma(1), delta(1), epsilon(1). CF(0) has three main subunits: a, b and c.

It is found in the cell inner membrane. Its function is as follows. Produces ATP from ADP in the presence of a proton gradient across the membrane. This is ATP synthase epsilon chain from Pseudomonas putida (strain GB-1).